Here is a 103-residue protein sequence, read N- to C-terminus: Sec-independent protein translocase protein TatA (103 aa).

The chain crosses the membrane as a helical span at residues 1–21 (MGNIFSPTHLIIILLLILLLF). Residues 48-103 (EESIEDKVEMADTSQVINEESQQSQPLSVKRAAIRRKASSDSKGGKASIAKKQRVK) form a disordered region. Residues 59-74 (DTSQVINEESQQSQPL) are compositionally biased toward polar residues.

Belongs to the TatA/E family. The Tat system comprises two distinct complexes: a TatABC complex, containing multiple copies of TatA, TatB and TatC subunits, and a separate TatA complex, containing only TatA subunits. Substrates initially bind to the TatABC complex, which probably triggers association of the separate TatA complex to form the active translocon.

The protein resides in the cell inner membrane. In terms of biological role, part of the twin-arginine translocation (Tat) system that transports large folded proteins containing a characteristic twin-arginine motif in their signal peptide across membranes. TatA could form the protein-conducting channel of the Tat system. This is Sec-independent protein translocase protein TatA from Bartonella tribocorum (strain CIP 105476 / IBS 506).